Here is a 968-residue protein sequence, read N- to C-terminus: Ribonuclease E (968 aa).

The region spanning 39–119 (SNIYKGKITR…GTKGAALTTF (81 aa)) is the S1 motif domain. Asp303 and Asp346 together coordinate Mg(2+). Zn(2+) is bound by residues Cys404 and Cys407. The interval 404–407 (CPRC) is required for zinc-mediated homotetramerization and catalytic activity. The tract at residues 947–968 (IKNSAGAHSATNFSTSPVKKSE) is disordered. A compositionally biased stretch (polar residues) spans 955 to 968 (SATNFSTSPVKKSE).

Belongs to the RNase E/G family. RNase E subfamily. As to quaternary structure, component of the RNA degradosome, which is a multiprotein complex involved in RNA processing and mRNA degradation. Within the RNA degradosome, RNase E assembles into a homotetramer formed by a dimer of dimers. It depends on Zn(2+) as a cofactor. The cofactor is Mg(2+).

It is found in the cytoplasm. Its subcellular location is the cell inner membrane. It carries out the reaction Endonucleolytic cleavage of single-stranded RNA in A- and U-rich regions.. In terms of biological role, endoribonuclease that plays a central role in RNA processing and decay. Required for the maturation of 5S and 16S rRNAs and the majority of tRNAs. Also involved in the degradation of most mRNAs. This is Ribonuclease E from Buchnera aphidicola subsp. Schizaphis graminum (strain Sg).